Consider the following 419-residue polypeptide: Nodulation protein NoeE (419 aa).

Required for the formation of sulfated nod factor. Proposed to transfer activated sulfate (PAPS) to the fucose of the nod factor. The sequence is that of Nodulation protein NoeE (noeE) from Sinorhizobium fredii (strain NBRC 101917 / NGR234).